We begin with the raw amino-acid sequence, 768 residues long: Probable dipeptidyl peptidase 4 (768 aa).

The N-terminal stretch at 1 to 17 (MKLGKWSVLLLVGCTAA) is a signal peptide. N-linked (GlcNAc...) asparagine glycans are attached at residues Asn38, Asn81, Asn104, Asn113, Asn221, Asn282, and Asn468. Ser616 acts as the Charge relay system in catalysis. The N-linked (GlcNAc...) asparagine glycan is linked to Asn668. Residues Asp693 and His728 each act as charge relay system in the active site.

This sequence belongs to the peptidase S9B family.

The protein resides in the secreted. It carries out the reaction Release of an N-terminal dipeptide, Xaa-Yaa-|-Zaa-, from a polypeptide, preferentially when Yaa is Pro, provided Zaa is neither Pro nor hydroxyproline.. Its function is as follows. Extracellular dipeptidyl-peptidase which removes N-terminal dipeptides sequentially from polypeptides having unsubstituted N-termini provided that the penultimate residue is proline. This is Probable dipeptidyl peptidase 4 (dpp4) from Aspergillus clavatus (strain ATCC 1007 / CBS 513.65 / DSM 816 / NCTC 3887 / NRRL 1 / QM 1276 / 107).